The following is a 376-amino-acid chain: Peroxisomal membrane protein PEX27 (376 aa).

As to quaternary structure, homooligomer. Interacts with PEX25 and PEX34.

The protein localises to the peroxisome membrane. In terms of biological role, required for regulation of peroxisome size and number. Also promotes peroxisome division and biogenesis. In Saccharomyces cerevisiae (strain ATCC 204508 / S288c) (Baker's yeast), this protein is Peroxisomal membrane protein PEX27 (PEX27).